The chain runs to 445 residues: Clusterin (445 aa).

The first 22 residues, Met1–Gly22, serve as a signal peptide directing secretion. The Nuclear localization signal signature appears at Lys78–Lys81. Residues Asn86 and Asn103 are each glycosylated (N-linked (GlcNAc...) asparagine). Cystine bridges form between Cys102/Cys309, Cys113/Cys301, Cys116/Cys298, Cys121/Cys291, and Cys129/Cys281. At Ser133 the chain carries Phosphoserine. 5 N-linked (GlcNAc...) asparagine glycosylation sites follow: Asn145, Asn277, Asn287, Asn350, and Asn370. Ser392 is modified (phosphoserine). The short motif at Arg439–Arg443 is the Nuclear localization signal element.

Belongs to the clusterin family. As to quaternary structure, antiparallel disulfide-linked heterodimer of an alpha chain and a beta chain. Self-associates and forms higher oligomers. Interacts with a broad range of misfolded proteins, including APP, APOC2 and LYZ. Slightly acidic pH promotes interaction with misfolded proteins. Forms high-molecular weight oligomers upon interaction with misfolded proteins. Interacts with APOA1, LRP2, CLUAP1 and PON1. Interacts with the complement membrane attack complex. Interacts (via alpha chain) with XRCC6. Interacts with SYVN1, COMMD1, BTRC, CUL1 and with ubiquitin and SCF (SKP1-CUL1-F-box protein) E3 ubiquitin-protein ligase complexes. Interacts (via alpha chain) with BAX in stressed cells, where BAX undergoes a conformation change leading to association with the mitochondrial membrane. Does not interact with BAX in unstressed cells. Found in a complex with LTF, CLU, EPPIN and SEMG1. Interacts (immaturely glycosylated pre-secreted form) with HSPA5; this interaction promotes CLU stability and facilitates stress-induced CLU retrotranslocation from the secretory pathway to the mitochondria, thereby reducing stress-induced apoptosis by stabilizing mitochondrial membrane integrity. Interacts with BCL2L1; this interaction releases and activates BAX and promotes cell death. Interacts with TGFBR2 and ACVR1. Interacts (secreted form) with STMN3; this interaction may act as an important modulator during neuronal differentiation. Interacts with VLDLR and LRP8. Post-translationally, proteolytically cleaved on its way through the secretory system, probably within the Golgi lumen. Proteolytic cleavage is not necessary for its chaperone activity. All non-secreted forms are not proteolytically cleaved. Chaperone activity of uncleaved forms is dependent on a non-reducing environment. This proteolytic maturation is disulfide bond formation dependent. Polyubiquitinated, leading to proteasomal degradation. Under cellular stress, the intracellular level of cleaved form is reduced due to proteasomal degradation. In terms of processing, heavily N-glycosylated. About 30% of the protein mass is comprised of complex N-linked carbohydrate. Endoplasmic reticulum (ER) stress induces changes in glycosylation status and increases level of hypoglycosylated forms. Core carbohydrates are essential for chaperone activity. Non-secreted forms are hypoglycosylated or unglycosylated.

Its subcellular location is the secreted. It is found in the nucleus. The protein localises to the cytoplasm. The protein resides in the mitochondrion membrane. It localises to the cytosol. Its subcellular location is the microsome. It is found in the endoplasmic reticulum. The protein localises to the mitochondrion. The protein resides in the perinuclear region. It localises to the cytoplasmic vesicle. Its subcellular location is the secretory vesicle. It is found in the chromaffin granule. Functions as extracellular chaperone that prevents aggregation of non native proteins. Prevents stress-induced aggregation of blood plasma proteins. Inhibits formation of amyloid fibrils by APP, APOC2, B2M, CALCA, CSN3, SNCA and aggregation-prone LYZ variants (in vitro). Does not require ATP. Maintains partially unfolded proteins in a state appropriate for subsequent refolding by other chaperones, such as HSPA8/HSC70. Does not refold proteins by itself. Binding to cell surface receptors triggers internalization of the chaperone-client complex and subsequent lysosomal or proteasomal degradation. When secreted, protects cells against apoptosis and against cytolysis by complement: inhibits assembly of the complement membrane attack complex (MAC) by preventing polymerization of C9 pore component of the MAC complex. Intracellular forms interact with ubiquitin and SCF (SKP1-CUL1-F-box protein) E3 ubiquitin-protein ligase complexes and promote the ubiquitination and subsequent proteasomal degradation of target proteins. Promotes proteasomal degradation of COMMD1 and IKBKB. Modulates NF-kappa-B transcriptional activity. Following stress, promotes apoptosis. Inhibits apoptosis when associated with the mitochondrial membrane by interference with BAX-dependent release of cytochrome c into the cytoplasm. Plays a role in the regulation of cell proliferation. An intracellular form suppresses stress-induced apoptosis by stabilizing mitochondrial membrane integrity through interaction with HSPA5. Secreted form does not affect caspase or BAX-mediated intrinsic apoptosis and TNF-induced NF-kappa-B-activity. Secreted form act as an important modulator during neuronal differentiation through interaction with STMN3. Plays a role in the clearance of immune complexes that arise during cell injury. The protein is Clusterin (CLU) of Canis lupus familiaris (Dog).